Reading from the N-terminus, the 62-residue chain is Delta-theraphotoxin-Cg1a 1 (62 aa).

The N-terminal stretch at 1-21 is a signal peptide; that stretch reads MKTSILFVIFSLALLFALSAA. A propeptide spanning residues 22–29 is cleaved from the precursor; the sequence is TEIEETDR. 3 disulfide bridges follow: Cys-31–Cys-46, Cys-38–Cys-51, and Cys-45–Cys-58.

This sequence belongs to the neurotoxin 10 (Hwtx-1) family. 33 (Jztx-1) subfamily. Expressed by the venom gland.

It localises to the secreted. In terms of biological role, inhibits voltage-gated sodium channels, preferentially subtype Nav1.5/SCN5A (in cardiac myocytes), but also Nav1.6/SCN8A and Nav1.7/SCN9A (TTX-sensitive Nav in rat DRG neurons) and invertebrate Nav (in insect neurons) as well as voltage-gated potassium channels of the subtype Kv2.1/KCNB1. Is suggested to bind to site 3 of the sodium channels and inhibit the inactivation of the activated channels, thereby blocking neuronal transmission. On potassium channels, inhibits activation of channels with an IC(50) of 8.05 uM through a voltage sensor-trapping mechanism. Increases muscle contraction in several assays (mouse phrenic nerve-diaphragm, toad heart, rat vas deferens) and is suggested to act both presynaptically and postsynaptically. Its function is as follows. Moderately inhibits voltage-gated sodium channels and weakly inhibits voltage-gated potassium channel. Inhibits the inactivation of rat Nav1.2/SCN2A (IC(50)=870 nM), rat Nav1.3/SCN3A (IC(50)=845 nM), rat Nav1.4/SCN4A (IC(50)=339 nM), human Nav1.5/SCN5A (IC(50)=335 nM) and human Nav1.7/SCN9A sodium channels (IC(50)=348 nM). The toxin delays the inactivation of sodium channels without affecting the activation and steady-state inactivation kinetics in the physiological range of voltages. Site-directed mutagenesis of the sodium channel indicates that the toxin interacts with site 3 located at the extracellular S3-S4 linker of domain IV. On potassium channels, it inhibits activation of channels with an IC(50) of 8.05 uM through a voltage sensor-trapping mechanism. It increases muscle contraction in several assays (mouse phrenic nerve-diaphragm, toad heart, rat vas deferens) and is suggested to act both presynaptically and postsynaptically. The chain is Delta-theraphotoxin-Cg1a 1 from Chilobrachys guangxiensis (Chinese earth tiger tarantula).